Here is a 201-residue protein sequence, read N- to C-terminus: Ciliary microtubule inner protein 2C (201 aa).

It belongs to the CIMIP2 family. As to quaternary structure, microtubule inner protein component of sperm flagellar doublet microtubules.

It is found in the cytoplasm. It localises to the cytoskeleton. Its subcellular location is the cilium axoneme. The protein localises to the flagellum axoneme. Its function is as follows. Microtubule inner protein (MIP) part of the dynein-decorated doublet microtubules (DMTs) in cilia axoneme, which is required for motile cilia beating. Binds to the intra-tubulin interfaces. The polypeptide is Ciliary microtubule inner protein 2C (CIMIP2C) (Bos taurus (Bovine)).